The sequence spans 510 residues: MIWHVQNDNFILNFTRIFMKAFHLPLFDGSFIFPECILIFGLILLLMIDSTSDQKDIPWLYFISSTSLVMSIMALLFRWREEPMISFSGNFQTNNFNEIFQVLILLCSTLCIPLSVEYIECTEMAITEFLLFVLTATLGGMFLCGANDLITIFVAPECFSFCSYLLSGYTKKDVRSNEATMKYLLMGGASSSILVHGFSWLYGLSGGEIELQEIVNGLINTQMYNSPGISIALIFITVGIGFKLSPAPSHQWTPDVYEGSPTPVVAFLSVTSKVAASALATRIFDIPFYLSSNEWHLLLEILALLSMILGNLIAITQTSMKRMLAYSSIGQIGYIIIGIIVGDSNDGYASMITYMLFYISMNLGTFACIILFGLRTGTDNIRDYAGLYTKDPFLALSLALCLLSLGGLPPLAGFFGKLYLFWCGWQAGLYFLVLIALVTSVLSIYYYLKIIKLLMNGRNQEITPHVGNYRRSSLRSKNSIEFSMIVCVIASTIPGISMNPIIAIAQDSLF.

Transmembrane regions (helical) follow at residues 26-46, 57-77, 99-119, 124-144, 149-169, 184-204, 227-247, 295-315, 323-343, 354-374, 395-415, 418-438, and 484-504; these read LFDG…ILLL, IPWL…ALLF, IFQV…VEYI, MAIT…MFLC, LITI…LSGY, LLMG…LYGL, PGIS…LSPA, WHLL…LIAI, MLAY…IVGD, YMLF…LFGL, ALSL…AGFF, LYLF…IALV, and MIVC…IIAI.

Belongs to the complex I subunit 2 family. NDH is composed of at least 16 different subunits, 5 of which are encoded in the nucleus.

Its subcellular location is the plastid. It localises to the chloroplast thylakoid membrane. The enzyme catalyses a plastoquinone + NADH + (n+1) H(+)(in) = a plastoquinol + NAD(+) + n H(+)(out). It carries out the reaction a plastoquinone + NADPH + (n+1) H(+)(in) = a plastoquinol + NADP(+) + n H(+)(out). Functionally, NDH shuttles electrons from NAD(P)H:plastoquinone, via FMN and iron-sulfur (Fe-S) centers, to quinones in the photosynthetic chain and possibly in a chloroplast respiratory chain. The immediate electron acceptor for the enzyme in this species is believed to be plastoquinone. Couples the redox reaction to proton translocation, and thus conserves the redox energy in a proton gradient. This Trachelium caeruleum (Blue throatwort) protein is NAD(P)H-quinone oxidoreductase subunit 2, chloroplastic.